A 500-amino-acid chain; its full sequence is Lysine--tRNA ligase (500 aa).

Mg(2+)-binding residues include Glu-409 and Glu-416.

It belongs to the class-II aminoacyl-tRNA synthetase family. Homodimer. Mg(2+) is required as a cofactor.

The protein resides in the cytoplasm. It carries out the reaction tRNA(Lys) + L-lysine + ATP = L-lysyl-tRNA(Lys) + AMP + diphosphate. The chain is Lysine--tRNA ligase from Lysinibacillus sphaericus (strain C3-41).